A 565-amino-acid chain; its full sequence is Transcription factor asqA (565 aa).

Positions 204 to 273 (MDTAMAQAVR…HSMPALCIDS (70 aa)) are fungal transcription factor domain.

Its subcellular location is the nucleus. Functionally, transcription factor that regulates specifically the 4'-methoxyviridicatin/aspoquinolone biosynthesis cluster. This chain is Transcription factor asqA, found in Emericella nidulans (strain FGSC A4 / ATCC 38163 / CBS 112.46 / NRRL 194 / M139) (Aspergillus nidulans).